The chain runs to 258 residues: uncharacterized protein (258 aa).

Residues 163–187 (GIVGAAGLMLMFADLNGIPGICLMG) traverse the membrane as a helical segment.

It is found in the membrane. This is an uncharacterized protein from Methanocaldococcus jannaschii (strain ATCC 43067 / DSM 2661 / JAL-1 / JCM 10045 / NBRC 100440) (Methanococcus jannaschii).